Consider the following 556-residue polypeptide: 2-succinyl-5-enolpyruvyl-6-hydroxy-3-cyclohexene-1-carboxylate synthase (556 aa).

It belongs to the TPP enzyme family. MenD subfamily. In terms of assembly, homodimer. Mg(2+) is required as a cofactor. It depends on Mn(2+) as a cofactor. Thiamine diphosphate serves as cofactor.

The catalysed reaction is isochorismate + 2-oxoglutarate + H(+) = 5-enolpyruvoyl-6-hydroxy-2-succinyl-cyclohex-3-ene-1-carboxylate + CO2. Its pathway is quinol/quinone metabolism; 1,4-dihydroxy-2-naphthoate biosynthesis; 1,4-dihydroxy-2-naphthoate from chorismate: step 2/7. The protein operates within quinol/quinone metabolism; menaquinone biosynthesis. Functionally, catalyzes the thiamine diphosphate-dependent decarboxylation of 2-oxoglutarate and the subsequent addition of the resulting succinic semialdehyde-thiamine pyrophosphate anion to isochorismate to yield 2-succinyl-5-enolpyruvyl-6-hydroxy-3-cyclohexene-1-carboxylate (SEPHCHC). The sequence is that of 2-succinyl-5-enolpyruvyl-6-hydroxy-3-cyclohexene-1-carboxylate synthase from Escherichia coli O157:H7.